The primary structure comprises 690 residues: DNA topoisomerase 1 (690 aa).

Positions 3 to 121 constitute a Toprim domain; that stretch reads DYLVIVESPA…EITKQAIKDA (119 aa). Mg(2+) is bound by residues Glu-9 and Asp-82. The Topo IA-type catalytic domain maps to 129–558; the sequence is NMDLVDAQQA…DFYKGFEERL (430 aa). Residues 163–168 are interaction with DNA; sequence SAGRVQ. Tyr-298 acts as the O-(5'-phospho-DNA)-tyrosine intermediate in catalysis. Residues 329 to 354 are disordered; that stretch reads NGTKAVKKDKKSQDAHEAIRPTSVER. Residues 339–354 show a composition bias toward basic and acidic residues; it reads KSQDAHEAIRPTSVER. 3 C4-type zinc fingers span residues 579-605, 619-647, and 660-683; these read CEKCGHEMVYKMGRYGKFMACSNFPDC, CPKCEKGEIVERKSKKRRVFYGCNQYPEC, and CPKCSSYLVEKRTKKQVQVQCSSC.

It belongs to the type IA topoisomerase family. In terms of assembly, monomer. Mg(2+) is required as a cofactor.

The enzyme catalyses ATP-independent breakage of single-stranded DNA, followed by passage and rejoining.. Its function is as follows. Releases the supercoiling and torsional tension of DNA, which is introduced during the DNA replication and transcription, by transiently cleaving and rejoining one strand of the DNA duplex. Introduces a single-strand break via transesterification at a target site in duplex DNA. The scissile phosphodiester is attacked by the catalytic tyrosine of the enzyme, resulting in the formation of a DNA-(5'-phosphotyrosyl)-enzyme intermediate and the expulsion of a 3'-OH DNA strand. The free DNA strand then undergoes passage around the unbroken strand, thus removing DNA supercoils. Finally, in the religation step, the DNA 3'-OH attacks the covalent intermediate to expel the active-site tyrosine and restore the DNA phosphodiester backbone. This Halalkalibacterium halodurans (strain ATCC BAA-125 / DSM 18197 / FERM 7344 / JCM 9153 / C-125) (Bacillus halodurans) protein is DNA topoisomerase 1.